The chain runs to 159 residues: Phosphopantetheine adenylyltransferase (159 aa).

A substrate-binding site is contributed by Thr-10. ATP is bound by residues Thr-10 to Phe-11 and His-18. 3 residues coordinate substrate: Lys-42, Leu-74, and Arg-88. Residues Gly-89 to Arg-91, Glu-99, and Trp-124 to Thr-130 each bind ATP.

This sequence belongs to the bacterial CoaD family. In terms of assembly, homohexamer. The cofactor is Mg(2+).

It localises to the cytoplasm. The catalysed reaction is (R)-4'-phosphopantetheine + ATP + H(+) = 3'-dephospho-CoA + diphosphate. Its pathway is cofactor biosynthesis; coenzyme A biosynthesis; CoA from (R)-pantothenate: step 4/5. Functionally, reversibly transfers an adenylyl group from ATP to 4'-phosphopantetheine, yielding dephospho-CoA (dPCoA) and pyrophosphate. This Mannheimia succiniciproducens (strain KCTC 0769BP / MBEL55E) protein is Phosphopantetheine adenylyltransferase.